The chain runs to 476 residues: Bifunctional protein GlmU (476 aa).

The interval 1 to 232 is pyrophosphorylase; the sequence is MDNLAAIILA…PVEVMGINDR (232 aa). Residues 9-12, lysine 23, glutamine 75, and 80-81 contribute to the UDP-N-acetyl-alpha-D-glucosamine site; these read LAAG and GT. Aspartate 105 contributes to the Mg(2+) binding site. The UDP-N-acetyl-alpha-D-glucosamine site is built by glycine 142, glutamate 157, asparagine 172, and asparagine 230. Asparagine 230 serves as a coordination point for Mg(2+). Residues 233–253 are linker; the sequence is VQLAEAARHARRRIAEEHMLN. The segment at 254 to 476 is N-acetyltransferase; it reads GVTLVDPAAT…EGWKLRKRDQ (223 aa). UDP-N-acetyl-alpha-D-glucosamine is bound by residues arginine 353 and lysine 371. Histidine 383 functions as the Proton acceptor in the catalytic mechanism. 2 residues coordinate UDP-N-acetyl-alpha-D-glucosamine: tyrosine 386 and asparagine 397. Residues 406 to 407, serine 425, alanine 443, and arginine 460 contribute to the acetyl-CoA site; that span reads NY.

The protein in the N-terminal section; belongs to the N-acetylglucosamine-1-phosphate uridyltransferase family. This sequence in the C-terminal section; belongs to the transferase hexapeptide repeat family. As to quaternary structure, homotrimer. Mg(2+) serves as cofactor.

Its subcellular location is the cytoplasm. The enzyme catalyses alpha-D-glucosamine 1-phosphate + acetyl-CoA = N-acetyl-alpha-D-glucosamine 1-phosphate + CoA + H(+). It carries out the reaction N-acetyl-alpha-D-glucosamine 1-phosphate + UTP + H(+) = UDP-N-acetyl-alpha-D-glucosamine + diphosphate. It functions in the pathway nucleotide-sugar biosynthesis; UDP-N-acetyl-alpha-D-glucosamine biosynthesis; N-acetyl-alpha-D-glucosamine 1-phosphate from alpha-D-glucosamine 6-phosphate (route II): step 2/2. It participates in nucleotide-sugar biosynthesis; UDP-N-acetyl-alpha-D-glucosamine biosynthesis; UDP-N-acetyl-alpha-D-glucosamine from N-acetyl-alpha-D-glucosamine 1-phosphate: step 1/1. Its pathway is bacterial outer membrane biogenesis; LPS lipid A biosynthesis. Catalyzes the last two sequential reactions in the de novo biosynthetic pathway for UDP-N-acetylglucosamine (UDP-GlcNAc). The C-terminal domain catalyzes the transfer of acetyl group from acetyl coenzyme A to glucosamine-1-phosphate (GlcN-1-P) to produce N-acetylglucosamine-1-phosphate (GlcNAc-1-P), which is converted into UDP-GlcNAc by the transfer of uridine 5-monophosphate (from uridine 5-triphosphate), a reaction catalyzed by the N-terminal domain. This is Bifunctional protein GlmU from Geobacter sulfurreducens (strain ATCC 51573 / DSM 12127 / PCA).